The chain runs to 512 residues: mRNA export factor (512 aa).

A disordered region spans residues methionine 1–alanine 242. Residues isoleucine 5–aspartate 17 carry the Nuclear export signal motif. Phosphoserine; by host is present on residues serine 16 and serine 18. 2 stretches are compositionally biased toward acidic residues: residues serine 16–aspartate 28 and proline 36–cysteine 55. Positions valine 104–arginine 112 are interaction with host ALYREF. The Nuclear localization signal motif lies at threonine 110–arginine 138. Serine 113 bears the Phosphoserine; by host mark. Residues proline 135–glycine 149 show a composition bias toward basic residues. Residue arginine 138 is modified to Dimethylated arginine; by host. Residues arginine 138–glycine 152 form an RGG-box region. Position 148 is an omega-N-methylarginine; by host (arginine 148). Arginine 150 carries the dimethylated arginine; by host modification. Basic and acidic residues predominate over residues alanine 228–proline 240. Positions 400, 479, 483, and 488 each coordinate Zn(2+). The CHC2-type zinc-finger motif lies at cysteine 400–cysteine 488.

This sequence belongs to the HHV-1 ICP27 protein family. Interacts with host RBP1; this interaction facilitates the RNA polymerase recruitment to viral transcription sites. Interacts (via the RGG box) with host ALYREF/THOC4; this interaction recruits ALYREF to viral replication compartments and probably directs viral mRNA to the TAP/NFX1 pathway. Interacts (via the RGG box) with host SRPK1; this interaction relocalizes SRPK1 to the nucleus and seems to alter its activity. Interacts with ICP4; this interaction modulates ICP4 DNA-binding activity. Interacts with host NXF1; this interaction allows efficient export of HSV-1 early and late transcripts. Interacts with host IRF3; this interaction inhibits IRF3 phosphorylation and nuclear translocation. Post-translationally, methylated within the RGG box possibly by host PRMT1. When hypomethylated, ICP27 is exported to the cytoplasm earlier and more rapidly. In terms of processing, phosphorylated.

Its subcellular location is the host cytoplasm. It is found in the host nucleus. Its function is as follows. Multifunctional regulator of the expression of viral genes that contributes to the shutoff of host protein synthesis and mediates nuclear export of viral intronless mRNAs. Also stimulates translation of viral transcripts. Independently, plays a role in the regulation of virion release. Also plays a role in the inhibition of host innate immune response by targeting host IRF3 and thereby preventing production of beta-interferon. Silences the 3' splice site of the host promyelocytic leukemia (PML) intron 7a, thereby switching PML isoforms from PML-II to PML-V. This could be linked to the accelerated mRNA export induced by ICP27 which might not provide sufficient time for PML pre-mRNA to be spliced in the nucleus. Also suppresses splicing of the viral ICP34.5 mRNA, allowing the virus to express a variant form of ICP34.5. In Human herpesvirus 2 (strain HG52) (HHV-2), this protein is mRNA export factor.